The following is a 170-amino-acid chain: Large ribosomal subunit protein uL10 (170 aa).

The protein belongs to the universal ribosomal protein uL10 family. Part of the ribosomal stalk of the 50S ribosomal subunit. The N-terminus interacts with L11 and the large rRNA to form the base of the stalk. The C-terminus forms an elongated spine to which L12 dimers bind in a sequential fashion forming a multimeric L10(L12)X complex.

Its function is as follows. Forms part of the ribosomal stalk, playing a central role in the interaction of the ribosome with GTP-bound translation factors. The polypeptide is Large ribosomal subunit protein uL10 (Chlamydia felis (strain Fe/C-56) (Chlamydophila felis)).